A 290-amino-acid polypeptide reads, in one-letter code: Diaminopimelate epimerase (290 aa).

Substrate contacts are provided by asparagine 17, glutamine 49, and asparagine 69. The active-site Proton donor is cysteine 78. Substrate is bound by residues 79 to 80, asparagine 165, asparagine 198, and 216 to 217; these read GN and ER. The active-site Proton acceptor is the cysteine 225. 226–227 provides a ligand contact to substrate; the sequence is GS.

The protein belongs to the diaminopimelate epimerase family. Homodimer.

The protein localises to the cytoplasm. It carries out the reaction (2S,6S)-2,6-diaminopimelate = meso-2,6-diaminopimelate. Its pathway is amino-acid biosynthesis; L-lysine biosynthesis via DAP pathway; DL-2,6-diaminopimelate from LL-2,6-diaminopimelate: step 1/1. Catalyzes the stereoinversion of LL-2,6-diaminopimelate (L,L-DAP) to meso-diaminopimelate (meso-DAP), a precursor of L-lysine and an essential component of the bacterial peptidoglycan. This is Diaminopimelate epimerase from Methylocella silvestris (strain DSM 15510 / CIP 108128 / LMG 27833 / NCIMB 13906 / BL2).